The chain runs to 113 residues: Ribosome-binding factor A (113 aa).

It belongs to the RbfA family. In terms of assembly, monomer. Binds 30S ribosomal subunits, but not 50S ribosomal subunits or 70S ribosomes.

It localises to the cytoplasm. Functionally, one of several proteins that assist in the late maturation steps of the functional core of the 30S ribosomal subunit. Associates with free 30S ribosomal subunits (but not with 30S subunits that are part of 70S ribosomes or polysomes). Required for efficient processing of 16S rRNA. May interact with the 5'-terminal helix region of 16S rRNA. This Mycoplasmopsis agalactiae (strain NCTC 10123 / CIP 59.7 / PG2) (Mycoplasma agalactiae) protein is Ribosome-binding factor A.